We begin with the raw amino-acid sequence, 213 residues long: 5-oxoprolinase subunit B (213 aa).

It belongs to the PxpB family. Forms a complex composed of PxpA, PxpB and PxpC.

It carries out the reaction 5-oxo-L-proline + ATP + 2 H2O = L-glutamate + ADP + phosphate + H(+). In terms of biological role, catalyzes the cleavage of 5-oxoproline to form L-glutamate coupled to the hydrolysis of ATP to ADP and inorganic phosphate. This is 5-oxoprolinase subunit B from Haemophilus influenzae (strain ATCC 51907 / DSM 11121 / KW20 / Rd).